Here is a 484-residue protein sequence, read N- to C-terminus: Protein nucleotidyltransferase YdiU (484 aa).

Positions 81, 83, 84, 103, 115, 116, 166, and 173 each coordinate ATP. Catalysis depends on Asp-244, which acts as the Proton acceptor. Residues Asn-245 and Asp-254 each coordinate Mg(2+). Asp-254 lines the ATP pocket.

This sequence belongs to the SELO family. Requires Mg(2+) as cofactor. It depends on Mn(2+) as a cofactor.

The enzyme catalyses L-seryl-[protein] + ATP = 3-O-(5'-adenylyl)-L-seryl-[protein] + diphosphate. The catalysed reaction is L-threonyl-[protein] + ATP = 3-O-(5'-adenylyl)-L-threonyl-[protein] + diphosphate. It carries out the reaction L-tyrosyl-[protein] + ATP = O-(5'-adenylyl)-L-tyrosyl-[protein] + diphosphate. It catalyses the reaction L-histidyl-[protein] + UTP = N(tele)-(5'-uridylyl)-L-histidyl-[protein] + diphosphate. The enzyme catalyses L-seryl-[protein] + UTP = O-(5'-uridylyl)-L-seryl-[protein] + diphosphate. The catalysed reaction is L-tyrosyl-[protein] + UTP = O-(5'-uridylyl)-L-tyrosyl-[protein] + diphosphate. Nucleotidyltransferase involved in the post-translational modification of proteins. It can catalyze the addition of adenosine monophosphate (AMP) or uridine monophosphate (UMP) to a protein, resulting in modifications known as AMPylation and UMPylation. This chain is Protein nucleotidyltransferase YdiU, found in Shewanella baltica (strain OS185).